The chain runs to 480 residues: Probable glycosyltransferase 2 (480 aa).

Positions 1-21 are enriched in gly residues; that stretch reads MGQEGMGYNNGKGGGGGGGGL. The disordered stretch occupies residues 1 to 45; it reads MGQEGMGYNNGKGGGGGGGGLPMTAPRPRGASPLSSHGHHHRSRK. The Cytoplasmic portion of the chain corresponds to 1–49; it reads MGQEGMGYNNGKGGGGGGGGLPMTAPRPRGASPLSSHGHHHRSRKIHRT. A helical; Signal-anchor for type II membrane protein membrane pass occupies residues 50–72; the sequence is FNNVKITVLCGLVTILVLRGTIG. Over 73 to 480 the chain is Lumenal; that stretch reads LNLSLPNQPT…DVKAKISTTS (408 aa). N-linked (GlcNAc...) asparagine glycosylation is found at Asn74, Asn124, Asn129, and Asn458.

This sequence belongs to the glycosyltransferase 34 family.

The protein resides in the golgi apparatus membrane. Functionally, probable glycosyltransferase that may be involved in the biosynthesis of xyloglucan. The chain is Probable glycosyltransferase 2 from Oryza sativa subsp. indica (Rice).